Here is a 323-residue protein sequence, read N- to C-terminus: Transcription factor LUX (323 aa).

3 disordered regions span residues 1 to 25 (MGEE…WEMG), 53 to 139 (ERSR…DLSG), and 267 to 298 (GYHH…ESNP). Residues 65 to 87 (SETTLSSLRGGSSGPNTSSSNNN) show a composition bias toward low complexity. A DNA-binding region (myb-like GARP) is located at residues 139-200 (GKTLKRPRLV…HLQKYRLYLK (62 aa)).

Interacts with ELF3 and forms a complex with ELF3 and ELF4.

Its subcellular location is the nucleus. Its function is as follows. Transcription factor that is essential for the generation of the circadian clock oscillation. Is necessary for activation of CCA1 and LHY expression. Is coregulated with TOC1 and seems to be repressed by CCA1 and LHY by direct binding of these proteins to the evening element in the LUX promoter. Directly regulates the expression of PRR9, a major component of the morning transcriptional feedback circuit, by binding specific sites on PRR9 promoter. Binds to its own promoter, inducing a negative auto-regulatory feedback loop within the core clock. Binds to ELF3 and associates with ELF4 in a diurnal complex which is required for the expression of the growth-promoting transcription factors PIF4 and PIF5 and subsequent hypocotyl growth in the early evening. The sequence is that of Transcription factor LUX (LUX) from Arabidopsis thaliana (Mouse-ear cress).